Reading from the N-terminus, the 46-residue chain is KQLLKEALAPEPAPKPAPEPAPEPAPEPAPEAAPEPAAAAPEAAPE.

Residues 1 to 10 (KQLLKEALAP) are compositionally biased toward low complexity. The segment at 1-46 (KQLLKEALAPEPAPKPAPEPAPEPAPEPAPEAAPEPAAAAPEAAPE) is disordered. Residues 11-33 (EPAPKPAPEPAPEPAPEPAPEAA) show a composition bias toward pro residues. PAPE repeat units lie at residues 16–19 (PAPE), 20–23 (PAPE), 24–27 (PAPE), and 28–31 (PAPE). Residues 34-46 (PEPAAAAPEAAPE) are compositionally biased toward low complexity.

Expressed by the venom gland.

The protein resides in the secreted. The sequence is that of Pape peptide from Tityus stigmurus (Brazilian scorpion).